Consider the following 180-residue polypeptide: MSAAFKELYNTKIVPKLVSDFNYDSVMQVPKLEKIVVNMGVGEAVSNSKLLDQAVEELTLLTGQKPVITKAKKSISNFKLREGQSIGAKVTLRGDRMYYFLEKLVSVALPRVRDFRGVSANAFDGRGNYTLGVKEQIIFPEINIDKVNKVRGMDIIIVTTAQTDAEAKSLLTEFGFPFKK.

It belongs to the universal ribosomal protein uL5 family. As to quaternary structure, part of the 50S ribosomal subunit; part of the 5S rRNA/L5/L18/L25 subcomplex. Contacts the 5S rRNA and the P site tRNA. Forms a bridge to the 30S subunit in the 70S ribosome.

Functionally, this is one of the proteins that bind and probably mediate the attachment of the 5S RNA into the large ribosomal subunit, where it forms part of the central protuberance. In the 70S ribosome it contacts protein S13 of the 30S subunit (bridge B1b), connecting the 2 subunits; this bridge is implicated in subunit movement. Contacts the P site tRNA; the 5S rRNA and some of its associated proteins might help stabilize positioning of ribosome-bound tRNAs. The polypeptide is Large ribosomal subunit protein uL5 (Acholeplasma laidlawii (strain PG-8A)).